Here is a 319-residue protein sequence, read N- to C-terminus: Plastid lipid-associated protein 2, chloroplastic (319 aa).

The N-terminal 59 residues, 1–59, are a transit peptide targeting the chloroplast; the sequence is MATVQFFNQFPCKTRVQSSANSKPLSKPPSSLVPMSALTRRPSFPPGEFAVSRSDFRVR. The disordered stretch occupies residues 17 to 39; that stretch reads QSSANSKPLSKPPSSLVPMSALT. Over residues 18-36 the composition is skewed to low complexity; sequence SSANSKPLSKPPSSLVPMS.

It belongs to the PAP/fibrillin family. In terms of tissue distribution, expressed almost exclusively in petals. Very weak expression in all other organs.

The protein resides in the plastid. The protein localises to the chloroplast. Its function is as follows. May stabilize the accumulated carotenoid structures. The sequence is that of Plastid lipid-associated protein 2, chloroplastic (PAP2) from Brassica campestris (Field mustard).